The primary structure comprises 57 residues: Conotoxin Cal6.34 (57 aa).

The first 22 residues, Met-1–Ala-22, serve as a signal peptide directing secretion. 3 disulfide bridges follow: Cys-26-Cys-37, Cys-29-Cys-43, and Cys-36-Cys-54.

The protein belongs to the conotoxin O1 superfamily. Expressed by the venom duct.

Its subcellular location is the secreted. Functionally, probable neurotoxin. This Californiconus californicus (California cone) protein is Conotoxin Cal6.34.